The primary structure comprises 501 residues: NAD(P)H-quinone oxidoreductase subunit 2, chloroplastic (501 aa).

A run of 14 helical transmembrane segments spans residues 15–35, 42–62, 82–102, 107–127, 132–152, 167–187, 210–230, 244–264, 278–298, 307–327, 334–354, 378–398, 410–430, and 466–486; these read ILPECVLIFCLISILILDLIL, VFFFISLVSLLLSIFILIFQL, IFRIFIALCSILCIPLSIDFI, LAITEFLIFLLTATIGGMFLC, LITIFVSLECLSLCSYLLSGY, LLIGGTSSSILAYGFSWLYGL, FGSLLALVFIIVGIGFKLSLV, PTPVVAFLSVASKIAGLALLV, WHSLLEISAICSMILGNLVAI, LAYSSISQIGYLMIGLVTGNF, IVYLLFYIFMNLGTFACIILF, FSLALCLLSLGGIPPLSGFFG, GLYFLVFIGLFTSVISIYYYL, and VSIIICVIASIFLGIFMNPII.

The protein belongs to the complex I subunit 2 family. NDH is composed of at least 16 different subunits, 5 of which are encoded in the nucleus.

It is found in the plastid. Its subcellular location is the chloroplast thylakoid membrane. The catalysed reaction is a plastoquinone + NADH + (n+1) H(+)(in) = a plastoquinol + NAD(+) + n H(+)(out). It carries out the reaction a plastoquinone + NADPH + (n+1) H(+)(in) = a plastoquinol + NADP(+) + n H(+)(out). Its function is as follows. NDH shuttles electrons from NAD(P)H:plastoquinone, via FMN and iron-sulfur (Fe-S) centers, to quinones in the photosynthetic chain and possibly in a chloroplast respiratory chain. The immediate electron acceptor for the enzyme in this species is believed to be plastoquinone. Couples the redox reaction to proton translocation, and thus conserves the redox energy in a proton gradient. This is NAD(P)H-quinone oxidoreductase subunit 2, chloroplastic from Physcomitrium patens (Spreading-leaved earth moss).